Consider the following 388-residue polypeptide: Granulocyte-macrophage colony-stimulating factor receptor subunit alpha (388 aa).

Positions 1 to 29 (MTSSHAMNITPLAQLALLFSTLLLPGTQA) are cleaved as a signal peptide. At 30–327 (LLAPTTPDAG…PLEAEDTRVP (298 aa)) the chain is on the extracellular side. Residues Asn43, Asn63, Asn106, Asn132, Asn165, and Asn237 are each glycosylated (N-linked (GlcNAc...) asparagine). The Fibronectin type-III domain occupies 228-324 (PPRDVTASCN…PAHPLEAEDT (97 aa)). Residues 310 to 314 (WGEWS) carry the WSXWS motif motif. The chain crosses the membrane as a helical span at residues 328–348 (GALLYAVTACAVLLCALALGV). Over 349–388 (TCRRFEVTRRLFPPIPGIRDKVSDDVRVNPETLRKDLLQP) the chain is Cytoplasmic. The Box 1 motif signature appears at 359 to 367 (LFPPIPGIR).

It belongs to the type I cytokine receptor family. Type 5 subfamily. As to quaternary structure, heterodimer of an alpha and a beta subunit. The beta subunit is common to the IL3, IL5 and GM-CSF receptors. The signaling GM-CSF receptor complex is a dodecamer of two head-to-head hexamers of two alpha, two beta, and two ligand subunits.

The protein localises to the membrane. Functionally, low affinity receptor for granulocyte-macrophage colony-stimulating factor. Transduces a signal that results in the proliferation, differentiation, and functional activation of hematopoietic cells. The chain is Granulocyte-macrophage colony-stimulating factor receptor subunit alpha (Csf2ra) from Mus musculus (Mouse).